Here is a 112-residue protein sequence, read N- to C-terminus: Putative membrane protein insertion efficiency factor (112 aa).

The protein belongs to the UPF0161 family.

It localises to the cell inner membrane. Functionally, could be involved in insertion of integral membrane proteins into the membrane. The sequence is that of Putative membrane protein insertion efficiency factor from Bradyrhizobium diazoefficiens (strain JCM 10833 / BCRC 13528 / IAM 13628 / NBRC 14792 / USDA 110).